Here is a 100-residue protein sequence, read N- to C-terminus: Small ribosomal subunit protein bS21 (100 aa).

Residues 37–52 (EKPSEKKAREKAEAVR) are compositionally biased toward basic and acidic residues. The disordered stretch occupies residues 37 to 100 (EKPSEKKARE…GAGAGPRGPR (64 aa)). Residues 53–62 (RARKLARKKL) show a composition bias toward basic residues. Residues 84–100 (GAAGAGAGAGAGPRGPR) show a composition bias toward gly residues.

It belongs to the bacterial ribosomal protein bS21 family.

This is Small ribosomal subunit protein bS21 from Rhodopseudomonas palustris (strain BisB5).